Reading from the N-terminus, the 363-residue chain is DNA replication and repair protein RecF (363 aa).

Position 30–37 (30–37 (GDNAQGKT)) interacts with ATP.

The protein belongs to the RecF family.

The protein resides in the cytoplasm. Functionally, the RecF protein is involved in DNA metabolism; it is required for DNA replication and normal SOS inducibility. RecF binds preferentially to single-stranded, linear DNA. It also seems to bind ATP. The chain is DNA replication and repair protein RecF from Syntrophotalea carbinolica (strain DSM 2380 / NBRC 103641 / GraBd1) (Pelobacter carbinolicus).